Here is a 431-residue protein sequence, read N- to C-terminus: MLRIITQLTDLRAELRRICDRTDSGEMSEQQATVEAILRRVAKDGDRALIEYTAQFDHIDLTPETLRVKGDELDAAYQQVSKELLDAIRLAKQQIEAFHRQRVPKSWVQFGEDGVVLGKRYTAVDAAGLYVPGGRAAYPSTVLMNAIPAQVAGVQRIVMVTPPGQGKGINPAVLVAAQEAGIQEIYRVGGAQAIAALAYGTETIPRVDVITGPGNLYVMLAKKQVYGRVGIDSLAGPSEVLIIADEAAHPAQIAADLLAQAEHDPLAAAILLTPSLSLAKAVVTAVNEQLADHPRRVLTEKAIAHYGLIGIVETLEQAVELSNSFAPEHLELEVEDPWSLVEQVRHAGAIFLGYSTPEAVGDYLAGPNHTLPTSGAARYASALGVETFLKHSSIIQYTPAALRKQGGAVMTLAETEGLISHRDSVRLRLQP.

NAD(+)-binding residues include Tyr130, Gln192, and Asn215. Substrate contacts are provided by Ser238, Gln260, and His263. Zn(2+) is bound by residues Gln260 and His263. Catalysis depends on proton acceptor residues Glu328 and His329. Substrate contacts are provided by His329, Asp362, Glu416, and His421. Asp362 is a binding site for Zn(2+). Residue His421 coordinates Zn(2+).

This sequence belongs to the histidinol dehydrogenase family. Requires Zn(2+) as cofactor.

The catalysed reaction is L-histidinol + 2 NAD(+) + H2O = L-histidine + 2 NADH + 3 H(+). It functions in the pathway amino-acid biosynthesis; L-histidine biosynthesis; L-histidine from 5-phospho-alpha-D-ribose 1-diphosphate: step 9/9. Functionally, catalyzes the sequential NAD-dependent oxidations of L-histidinol to L-histidinaldehyde and then to L-histidine. This Thermosynechococcus vestitus (strain NIES-2133 / IAM M-273 / BP-1) protein is Histidinol dehydrogenase.